The following is a 393-amino-acid chain: Formate-dependent phosphoribosylglycinamide formyltransferase (393 aa).

N(1)-(5-phospho-beta-D-ribosyl)glycinamide-binding positions include 22–23 and glutamate 82; that span reads EL. Residues arginine 114, lysine 155, 160-165, 195-198, and glutamate 203 contribute to the ATP site; these read SSGHGQ and EGFV. The ATP-grasp domain maps to 119-308; it reads RLAAEELGLP…EFALHARAIL (190 aa). The Mg(2+) site is built by glutamate 267 and glutamate 279. Residues aspartate 286, lysine 356, and 363–364 each bind N(1)-(5-phospho-beta-D-ribosyl)glycinamide; that span reads RR.

The protein belongs to the PurK/PurT family. As to quaternary structure, homodimer.

It carries out the reaction N(1)-(5-phospho-beta-D-ribosyl)glycinamide + formate + ATP = N(2)-formyl-N(1)-(5-phospho-beta-D-ribosyl)glycinamide + ADP + phosphate + H(+). The protein operates within purine metabolism; IMP biosynthesis via de novo pathway; N(2)-formyl-N(1)-(5-phospho-D-ribosyl)glycinamide from N(1)-(5-phospho-D-ribosyl)glycinamide (formate route): step 1/1. Its function is as follows. Involved in the de novo purine biosynthesis. Catalyzes the transfer of formate to 5-phospho-ribosyl-glycinamide (GAR), producing 5-phospho-ribosyl-N-formylglycinamide (FGAR). Formate is provided by PurU via hydrolysis of 10-formyl-tetrahydrofolate. In Mannheimia succiniciproducens (strain KCTC 0769BP / MBEL55E), this protein is Formate-dependent phosphoribosylglycinamide formyltransferase.